The primary structure comprises 195 residues: 3-isopropylmalate dehydratase small subunit (195 aa).

This sequence belongs to the LeuD family. LeuD type 1 subfamily. As to quaternary structure, heterodimer of LeuC and LeuD.

It catalyses the reaction (2R,3S)-3-isopropylmalate = (2S)-2-isopropylmalate. The protein operates within amino-acid biosynthesis; L-leucine biosynthesis; L-leucine from 3-methyl-2-oxobutanoate: step 2/4. Its function is as follows. Catalyzes the isomerization between 2-isopropylmalate and 3-isopropylmalate, via the formation of 2-isopropylmaleate. The chain is 3-isopropylmalate dehydratase small subunit from Frankia alni (strain DSM 45986 / CECT 9034 / ACN14a).